A 131-amino-acid chain; its full sequence is Leptin receptor gene-related protein (131 aa).

4 helical membrane-spanning segments follow: residues 7–27 (LVAL…GCAL), 32–52 (VYWP…HFIA), 69–89 (LAYF…VILA), and 100–120 (GLVL…FLIF).

Belongs to the OB-RGRP/VPS55 family. As to quaternary structure, interacts with LEPR. Interacts with RAB13. As to expression, expressed at the highest levels in heart and placenta and at a lesser extent in lung, liver, skeletal muscle, kidney and pancreas.

The protein localises to the golgi apparatus membrane. It localises to the endosome membrane. Its function is as follows. Negatively regulates leptin receptor (LEPR) cell surface expression, and thus decreases response to leptin. Negatively regulates growth hormone (GH) receptor cell surface expression in liver. May play a role in liver resistance to GH during periods of reduced nutrient availability. This is Leptin receptor gene-related protein (LEPROT) from Homo sapiens (Human).